Here is a 565-residue protein sequence, read N- to C-terminus: Proline--tRNA ligase (565 aa).

The protein belongs to the class-II aminoacyl-tRNA synthetase family. ProS type 1 subfamily. Homodimer.

It localises to the cytoplasm. It carries out the reaction tRNA(Pro) + L-proline + ATP = L-prolyl-tRNA(Pro) + AMP + diphosphate. Functionally, catalyzes the attachment of proline to tRNA(Pro) in a two-step reaction: proline is first activated by ATP to form Pro-AMP and then transferred to the acceptor end of tRNA(Pro). As ProRS can inadvertently accommodate and process non-cognate amino acids such as alanine and cysteine, to avoid such errors it has two additional distinct editing activities against alanine. One activity is designated as 'pretransfer' editing and involves the tRNA(Pro)-independent hydrolysis of activated Ala-AMP. The other activity is designated 'posttransfer' editing and involves deacylation of mischarged Ala-tRNA(Pro). The misacylated Cys-tRNA(Pro) is not edited by ProRS. The polypeptide is Proline--tRNA ligase (Francisella philomiragia subsp. philomiragia (strain ATCC 25017 / CCUG 19701 / FSC 153 / O#319-036)).